A 272-amino-acid chain; its full sequence is Undecaprenyl-diphosphatase (272 aa).

The next 8 helical transmembrane spans lie at 2–22, 50–70, 83–103, 110–130, 148–168, 195–215, 220–240, and 250–270; these read LELIKAIFLGIVEGITEWLPI, VIQLGAIMAVVVLYWNKLFPF, FSLWIKVLAATLPAALIGVPF, LFYNYITVAITLIVYGVLFII, LGYKAVLLIGAFQVLALIPGT, LAIPVMFGASLLKLVKFGFAF, LIILLTGMIVAFAVSIFAIKF, and FKAFGYYRIILGLIVVLYFLA.

This sequence belongs to the UppP family.

The protein localises to the cell membrane. It catalyses the reaction di-trans,octa-cis-undecaprenyl diphosphate + H2O = di-trans,octa-cis-undecaprenyl phosphate + phosphate + H(+). Its function is as follows. Catalyzes the dephosphorylation of undecaprenyl diphosphate (UPP). Confers resistance to bacitracin. The chain is Undecaprenyl-diphosphatase from Acetivibrio thermocellus (strain ATCC 27405 / DSM 1237 / JCM 9322 / NBRC 103400 / NCIMB 10682 / NRRL B-4536 / VPI 7372) (Clostridium thermocellum).